The primary structure comprises 1273 residues: Clustered mitochondria protein homolog (1273 aa).

The Clu domain maps to 344-599; the sequence is PANNADYSRM…NTYPLDVKFA (256 aa). TPR repeat units follow at residues 981-1013, 1022-1055, and 1151-1184; these read SDQK…KEEV, AEKY…YERV, and ATLE…FTRE. Disordered regions lie at residues 1217–1242 and 1254–1273; these read AEQA…KAEL and IEGG…KGKK. The span at 1262–1273 shows a compositional bias: basic residues; it reads SKKKSSKKKGKK.

Belongs to the CLU family. May associate with the eukaryotic translation initiation factor 3 (eIF-3) complex.

The protein resides in the cytoplasm. Functionally, mRNA-binding protein involved in proper cytoplasmic distribution of mitochondria. This chain is Clustered mitochondria protein homolog, found in Vanderwaltozyma polyspora (strain ATCC 22028 / DSM 70294 / BCRC 21397 / CBS 2163 / NBRC 10782 / NRRL Y-8283 / UCD 57-17) (Kluyveromyces polysporus).